The sequence spans 181 residues: Isopentenyl-diphosphate Delta-isomerase (181 aa).

Positions 24 and 30 each coordinate Mn(2+). In terms of domain architecture, Nudix hydrolase spans 28–168 (LLHLAFSVLL…PDTFSVWFPT (141 aa)). The active site involves Cys-68. Cys-68 contributes to the Mg(2+) binding site. A Mn(2+)-binding site is contributed by His-70. Glu-88 is a Mg(2+) binding site. 2 residues coordinate Mn(2+): Glu-117 and Glu-119. Glu-119 is a catalytic residue.

It belongs to the IPP isomerase type 1 family. Mg(2+) is required as a cofactor. Requires Mn(2+) as cofactor.

It is found in the cytoplasm. It catalyses the reaction isopentenyl diphosphate = dimethylallyl diphosphate. It participates in isoprenoid biosynthesis; dimethylallyl diphosphate biosynthesis; dimethylallyl diphosphate from isopentenyl diphosphate: step 1/1. Functionally, catalyzes the 1,3-allylic rearrangement of the homoallylic substrate isopentenyl (IPP) to its highly electrophilic allylic isomer, dimethylallyl diphosphate (DMAPP). The chain is Isopentenyl-diphosphate Delta-isomerase from Aliivibrio fischeri (strain ATCC 700601 / ES114) (Vibrio fischeri).